We begin with the raw amino-acid sequence, 522 residues long: Coiled-coil domain-containing protein 149-B (522 aa).

Coiled-coil stretches lie at residues 1-196 and 260-287; these read MANQ…LESK and IRHQ…LEVS. Residues 413 to 522 form a disordered region; sequence ACTAERSEQH…TSPHQECPSS (110 aa). Composition is skewed to polar residues over residues 429 to 438, 467 to 490, and 503 to 522; these read GGHQSMSTEA, QPVT…TAEQ, and ASLN…CPSS.

The protein belongs to the CCDC149 family.

The polypeptide is Coiled-coil domain-containing protein 149-B (ccdc149b) (Danio rerio (Zebrafish)).